We begin with the raw amino-acid sequence, 467 residues long: 3-isopropylmalate dehydratase large subunit (467 aa).

Residues cysteine 347, cysteine 407, and cysteine 410 each coordinate [4Fe-4S] cluster.

It belongs to the aconitase/IPM isomerase family. LeuC type 1 subfamily. As to quaternary structure, heterodimer of LeuC and LeuD. It depends on [4Fe-4S] cluster as a cofactor.

The catalysed reaction is (2R,3S)-3-isopropylmalate = (2S)-2-isopropylmalate. Its pathway is amino-acid biosynthesis; L-leucine biosynthesis; L-leucine from 3-methyl-2-oxobutanoate: step 2/4. Catalyzes the isomerization between 2-isopropylmalate and 3-isopropylmalate, via the formation of 2-isopropylmaleate. In Synechococcus sp. (strain JA-3-3Ab) (Cyanobacteria bacterium Yellowstone A-Prime), this protein is 3-isopropylmalate dehydratase large subunit.